We begin with the raw amino-acid sequence, 161 residues long: RNA pyrophosphohydrolase (161 aa).

A Nudix hydrolase domain is found at 7–149; sequence KYRPCVGIML…KKEVYKTVIE (143 aa). The Nudix box signature appears at 40 to 61; it reads GGIDDGEKLEQAALRELLEEVG.

This sequence belongs to the Nudix hydrolase family. RppH subfamily. The cofactor is a divalent metal cation.

Accelerates the degradation of transcripts by removing pyrophosphate from the 5'-end of triphosphorylated RNA, leading to a more labile monophosphorylated state that can stimulate subsequent ribonuclease cleavage. The protein is RNA pyrophosphohydrolase of Wolbachia sp. subsp. Brugia malayi (strain TRS).